Consider the following 422-residue polypeptide: Probable Na(+)/H(+) antiporter 2 (422 aa).

Helical transmembrane passes span 3 to 23 (IVLF…IAKI), 28 to 48 (GIPD…LNVI), 52 to 72 (IVES…LFIG), 93 to 113 (ILAL…VFHL), 119 to 139 (IGLL…IPIF), 157 to 177 (VFND…LGLA), 183 to 203 (ILEF…AGKF), 216 to 236 (YIAP…EGIF), 242 to 262 (YEIS…NVIV), 281 to 301 (LSIF…SIPL), 307 to 327 (LPAF…GVLI), 341 to 361 (IYLA…AMVY), and 384 to 404 (LAGT…VLEA).

The protein belongs to the monovalent cation:proton antiporter 1 (CPA1) transporter (TC 2.A.36) family.

Its subcellular location is the cell membrane. In terms of biological role, this is probably a Na(+)/H(+) antiporter. This Methanocaldococcus jannaschii (strain ATCC 43067 / DSM 2661 / JAL-1 / JCM 10045 / NBRC 100440) (Methanococcus jannaschii) protein is Probable Na(+)/H(+) antiporter 2.